The following is a 583-amino-acid chain: Thiol:disulfide interchange protein DsbD (583 aa).

A signal peptide spans 1–18 (MRRLFLLLFMLFTTLAHA). 2 cysteine pairs are disulfide-bonded: cysteine 118–cysteine 124 and cysteine 186–cysteine 306. Helical transmembrane passes span 168 to 188 (GLGL…PCSL), 214 to 234 (SYVL…ALLG), 245 to 265 (WVLG…FGFF), 289 to 309 (LIGC…CMTA), 326 to 346 (FGGL…LLLV), 359 to 379 (WMNL…IYML), 382 to 402 (VLNP…VAYC), and 413 to 433 (LLHL…MLLV). Residues 458 to 581 (VTAHDAFTTV…FLQRWTQTRE (124 aa)) enclose the Thioredoxin domain. The cysteines at positions 496 and 499 are disulfide-linked.

It belongs to the thioredoxin family. DsbD subfamily.

It is found in the cell inner membrane. The enzyme catalyses [protein]-dithiol + NAD(+) = [protein]-disulfide + NADH + H(+). The catalysed reaction is [protein]-dithiol + NADP(+) = [protein]-disulfide + NADPH + H(+). Functionally, required to facilitate the formation of correct disulfide bonds in some periplasmic proteins and for the assembly of the periplasmic c-type cytochromes. Acts by transferring electrons from cytoplasmic thioredoxin to the periplasm. This transfer involves a cascade of disulfide bond formation and reduction steps. The polypeptide is Thiol:disulfide interchange protein DsbD (Pseudomonas fluorescens (strain ATCC BAA-477 / NRRL B-23932 / Pf-5)).